Here is a 548-residue protein sequence, read N- to C-terminus: Cilia- and flagella-associated protein 97 (548 aa).

Phosphoserine occurs at positions 8 and 19. Disordered regions lie at residues 85 to 297, 407 to 431, and 497 to 548; these read NYLT…RQEN, LSRQAEKPGNKSTIPGRSLGHPPKL, and YSPL…LRSH. A compositionally biased stretch (basic and acidic residues) spans 91–107; that stretch reads GNERKPKFPSKEQHVEN. Residues 112 to 121 are compositionally biased toward low complexity; sequence TRSPSLLTSS. Over residues 152–161 the composition is skewed to acidic residues; it reads DYYTDGEESS. Phosphothreonine is present on Thr155. A phosphoserine mark is found at Ser160 and Ser161. Over residues 191 to 209 the composition is skewed to low complexity; that stretch reads KASSSSLSSSSSRSSSDCS. Residues 214–237 show a composition bias toward polar residues; sequence DMQNKPDSGSSGKRVSSVTPSSPK. Ser235 carries the post-translational modification Phosphoserine. Residues 238-248 are compositionally biased toward basic residues; it reads QKCKSGRKSSA. Ser259 is modified (phosphoserine). Polar residues predominate over residues 264–289; sequence TDVTPASTPDSSPAQPFELSQSQNQK. The stretch at 383 to 460 forms a coiled coil; it reads RKNYSFTREE…ALLKRLEAVK (78 aa). 2 stretches are compositionally biased toward polar residues: residues 504 to 514 and 537 to 548; these read SRTSSATSGLS and IQCSNSKVLRSH.

This sequence belongs to the CFAP97 family.

The chain is Cilia- and flagella-associated protein 97 from Rattus norvegicus (Rat).